Reading from the N-terminus, the 271-residue chain is Tryptophan synthase alpha chain (271 aa).

Catalysis depends on proton acceptor residues E49 and D60.

The protein belongs to the TrpA family. As to quaternary structure, tetramer of two alpha and two beta chains.

The catalysed reaction is (1S,2R)-1-C-(indol-3-yl)glycerol 3-phosphate + L-serine = D-glyceraldehyde 3-phosphate + L-tryptophan + H2O. It functions in the pathway amino-acid biosynthesis; L-tryptophan biosynthesis; L-tryptophan from chorismate: step 5/5. The alpha subunit is responsible for the aldol cleavage of indoleglycerol phosphate to indole and glyceraldehyde 3-phosphate. The polypeptide is Tryptophan synthase alpha chain (Burkholderia multivorans (strain ATCC 17616 / 249)).